Reading from the N-terminus, the 313-residue chain is Homoserine O-succinyltransferase (313 aa).

C142 acts as the Acyl-thioester intermediate in catalysis. 2 residues coordinate substrate: K163 and S192. H235 serves as the catalytic Proton acceptor. E237 is a catalytic residue. R249 provides a ligand contact to substrate.

Belongs to the MetA family.

Its subcellular location is the cytoplasm. It catalyses the reaction L-homoserine + succinyl-CoA = O-succinyl-L-homoserine + CoA. Its pathway is amino-acid biosynthesis; L-methionine biosynthesis via de novo pathway; O-succinyl-L-homoserine from L-homoserine: step 1/1. In terms of biological role, transfers a succinyl group from succinyl-CoA to L-homoserine, forming succinyl-L-homoserine. The chain is Homoserine O-succinyltransferase from Shewanella oneidensis (strain ATCC 700550 / JCM 31522 / CIP 106686 / LMG 19005 / NCIMB 14063 / MR-1).